We begin with the raw amino-acid sequence, 266 residues long: Small ribosomal subunit protein eS1 (266 aa).

Positions 234–266 (EGGTGTATKATGDDTGAKVERADGYEPPIQETV) are disordered. Residues 244–257 (TGDDTGAKVERADG) show a composition bias toward basic and acidic residues.

It belongs to the eukaryotic ribosomal protein eS1 family. In terms of assembly, component of the small ribosomal subunit. Mature ribosomes consist of a small (40S) and a large (60S) subunit. The 40S subunit contains about 33 different proteins and 1 molecule of RNA (18S). The 60S subunit contains about 49 different proteins and 3 molecules of RNA (28S, 5.8S and 5S). Part of the small subunit (SSU) processome, composed of more than 70 proteins and the RNA chaperone small nucleolar RNA (snoRNA) U3.

It localises to the cytoplasm. The protein resides in the nucleus. The protein localises to the nucleolus. Component of the small ribosomal subunit. The ribosome is a large ribonucleoprotein complex responsible for the synthesis of proteins in the cell. Part of the small subunit (SSU) processome, first precursor of the small eukaryotic ribosomal subunit. During the assembly of the SSU processome in the nucleolus, many ribosome biogenesis factors, an RNA chaperone and ribosomal proteins associate with the nascent pre-rRNA and work in concert to generate RNA folding, modifications, rearrangements and cleavage as well as targeted degradation of pre-ribosomal RNA by the RNA exosome. May play a role during erythropoiesis. In Solea senegalensis (Senegalese sole), this protein is Small ribosomal subunit protein eS1 (rps3a).